A 515-amino-acid chain; its full sequence is Galactose/methyl galactoside import ATP-binding protein MglA (515 aa).

ABC transporter domains lie at 8–243 and 254–499; these read LEMR…VGRE and IPKE…AKYL. 40-47 contributes to the ATP binding site; that stretch reads GENGAGKS.

The protein belongs to the ABC transporter superfamily. Galactose/methyl galactoside importer (TC 3.A.1.2.3) family. The complex is composed of one ATP-binding protein (MglA), two transmembrane proteins (MglC) and a solute-binding protein (MglB).

It localises to the cell membrane. The enzyme catalyses D-galactose(out) + ATP + H2O = D-galactose(in) + ADP + phosphate + H(+). It catalyses the reaction methyl beta-D-galactoside(out) + ATP + H2O = methyl beta-D-galactoside(in) + ADP + phosphate + H(+). Functionally, part of the ABC transporter complex MglABC involved in galactose/methyl galactoside import. Responsible for energy coupling to the transport system. The sequence is that of Galactose/methyl galactoside import ATP-binding protein MglA from Clostridium perfringens (strain SM101 / Type A).